Here is a 485-residue protein sequence, read N- to C-terminus: Threonine synthase-like 2 (485 aa).

At Lys113 the chain carries N6-(pyridoxal phosphate)lysine.

It belongs to the threonine synthase family. It depends on pyridoxal 5'-phosphate as a cofactor.

Functionally, acts as a catabolic phospho-lyase on both gamma- and beta-phosphorylated substrates. Degrades O-phospho-threonine (PThr) to alpha-ketobutyrate, ammonia and phosphate. The polypeptide is Threonine synthase-like 2 (Thnsl2) (Rattus norvegicus (Rat)).